The sequence spans 249 residues: Enolase-phosphatase E1 (249 aa).

Mg(2+) is bound by residues Asp-15 and Glu-17. Substrate-binding positions include Ser-146–Ser-147 and Lys-180. Asp-205 lines the Mg(2+) pocket.

Belongs to the HAD-like hydrolase superfamily. MasA/MtnC family. In terms of assembly, monomer. It depends on Mg(2+) as a cofactor.

The protein resides in the cytoplasm. It localises to the nucleus. It carries out the reaction 5-methylsulfanyl-2,3-dioxopentyl phosphate + H2O = 1,2-dihydroxy-5-(methylsulfanyl)pent-1-en-3-one + phosphate. It functions in the pathway amino-acid biosynthesis; L-methionine biosynthesis via salvage pathway; L-methionine from S-methyl-5-thio-alpha-D-ribose 1-phosphate: step 3/6. The protein operates within amino-acid biosynthesis; L-methionine biosynthesis via salvage pathway; L-methionine from S-methyl-5-thio-alpha-D-ribose 1-phosphate: step 4/6. Functionally, bifunctional enzyme that catalyzes the enolization of 2,3-diketo-5-methylthiopentyl-1-phosphate (DK-MTP-1-P) into the intermediate 2-hydroxy-3-keto-5-methylthiopentenyl-1-phosphate (HK-MTPenyl-1-P), which is then dephosphorylated to form the acireductone 1,2-dihydroxy-3-keto-5-methylthiopentene (DHK-MTPene). This Caenorhabditis briggsae protein is Enolase-phosphatase E1.